We begin with the raw amino-acid sequence, 153 residues long: Endoribonuclease YbeY (153 aa).

Residues His115, His119, and His125 each contribute to the Zn(2+) site.

Belongs to the endoribonuclease YbeY family. Zn(2+) serves as cofactor.

Its subcellular location is the cytoplasm. Its function is as follows. Single strand-specific metallo-endoribonuclease involved in late-stage 70S ribosome quality control and in maturation of the 3' terminus of the 16S rRNA. The chain is Endoribonuclease YbeY from Blochmanniella floridana.